We begin with the raw amino-acid sequence, 471 residues long: UDP-N-acetylmuramate--L-alanine ligase (471 aa).

114–120 (GTHGKTT) serves as a coordination point for ATP.

It belongs to the MurCDEF family.

The protein resides in the cytoplasm. It carries out the reaction UDP-N-acetyl-alpha-D-muramate + L-alanine + ATP = UDP-N-acetyl-alpha-D-muramoyl-L-alanine + ADP + phosphate + H(+). It functions in the pathway cell wall biogenesis; peptidoglycan biosynthesis. In terms of biological role, cell wall formation. The chain is UDP-N-acetylmuramate--L-alanine ligase from Rhizobium etli (strain ATCC 51251 / DSM 11541 / JCM 21823 / NBRC 15573 / CFN 42).